Reading from the N-terminus, the 72-residue chain is SRY-related protein AES2 (72 aa).

A DNA-binding region (HMG box) is located at residues 1 to 69; the sequence is VKRPMNAFMV…KHMADYPDYK (69 aa).

It is found in the nucleus. The polypeptide is SRY-related protein AES2 (Alligator mississippiensis (American alligator)).